The sequence spans 188 residues: ATP synthase subunit b (188 aa).

Residues 19-39 traverse the membrane as a helical segment; sequence LPAVYDIVWSAVVFVVLLVVI.

It belongs to the ATPase B chain family. F-type ATPases have 2 components, F(1) - the catalytic core - and F(0) - the membrane proton channel. F(1) has five subunits: alpha(3), beta(3), gamma(1), delta(1), epsilon(1). F(0) has three main subunits: a(1), b(2) and c(10-14). The alpha and beta chains form an alternating ring which encloses part of the gamma chain. F(1) is attached to F(0) by a central stalk formed by the gamma and epsilon chains, while a peripheral stalk is formed by the delta and b chains.

It is found in the cell membrane. In terms of biological role, f(1)F(0) ATP synthase produces ATP from ADP in the presence of a proton or sodium gradient. F-type ATPases consist of two structural domains, F(1) containing the extramembraneous catalytic core and F(0) containing the membrane proton channel, linked together by a central stalk and a peripheral stalk. During catalysis, ATP synthesis in the catalytic domain of F(1) is coupled via a rotary mechanism of the central stalk subunits to proton translocation. Component of the F(0) channel, it forms part of the peripheral stalk, linking F(1) to F(0). This chain is ATP synthase subunit b, found in Clavibacter michiganensis subsp. michiganensis (strain NCPPB 382).